The following is an 849-amino-acid chain: Glycogen phosphorylase (849 aa).

Position 679 is an N6-(pyridoxal phosphate)lysine (lysine 679).

It belongs to the glycogen phosphorylase family. The cofactor is pyridoxal 5'-phosphate.

It carries out the reaction [(1-&gt;4)-alpha-D-glucosyl](n) + phosphate = [(1-&gt;4)-alpha-D-glucosyl](n-1) + alpha-D-glucose 1-phosphate. Phosphorylase is an important allosteric enzyme in carbohydrate metabolism. Enzymes from different sources differ in their regulatory mechanisms and in their natural substrates. However, all known phosphorylases share catalytic and structural properties. The protein is Glycogen phosphorylase (glgP) of Synechocystis sp. (strain ATCC 27184 / PCC 6803 / Kazusa).